The following is a 141-amino-acid chain: Nucleoside triphosphatase NudI (141 aa).

The region spanning 1–141 (MRQRTIVCPL…RKTLRLKGLL (141 aa)) is the Nudix hydrolase domain. A Nudix box motif is present at residues 38–59 (GGVEPGERIEEALRREIREELG).

Belongs to the Nudix hydrolase family. NudI subfamily. Monomer. Requires Mg(2+) as cofactor.

The enzyme catalyses a ribonucleoside 5'-triphosphate + H2O = a ribonucleoside 5'-phosphate + diphosphate + H(+). It catalyses the reaction a 2'-deoxyribonucleoside 5'-triphosphate + H2O = a 2'-deoxyribonucleoside 5'-phosphate + diphosphate + H(+). The catalysed reaction is dUTP + H2O = dUMP + diphosphate + H(+). It carries out the reaction dTTP + H2O = dTMP + diphosphate + H(+). The enzyme catalyses dCTP + H2O = dCMP + diphosphate + H(+). In terms of biological role, catalyzes the hydrolysis of nucleoside triphosphates, with a preference for pyrimidine deoxynucleoside triphosphates (dUTP, dTTP and dCTP). This is Nucleoside triphosphatase NudI from Escherichia coli O9:H4 (strain HS).